The chain runs to 232 residues: Exosome complex component RRP40 (232 aa).

The protein belongs to the RRP40 family. In terms of assembly, component of the RNA exosome complex. Specifically part of the catalytically inactive RNA exosome core complex.

It localises to the cytoplasm. The protein resides in the nucleus. The protein localises to the nucleolus. In terms of biological role, non-catalytic component of the RNA exosome complex which has 3'-&gt;5' exoribonuclease activity and participates in a multitude of cellular RNA processing and degradation events. In the nucleus, the RNA exosome complex is involved in proper maturation of stable RNA species such as rRNA, snRNA and snoRNA, in the elimination of RNA processing by-products and non-coding 'pervasive' transcripts such as antisense RNA species, and of mRNAs with processing defects, thereby limiting or excluding their export to the cytoplasm. In the cytoplasm, the RNA exosome complex is involved in general mRNA turnover and specifically degrades inherently unstable mRNAs containing AU-rich elements (AREs) within their 3' untranslated regions, and in RNA surveillance pathways, preventing translation of aberrant mRNAs. The catalytic inactive RNA exosome core complex of 9 subunits is proposed to play a pivotal role in the binding and presentation of RNA for ribonucleolysis, and to serve as a scaffold for the association with catalytic subunits and accessory proteins or complexes. Required generally for normal embryonic and neuronal development. Also plays a critical role in the maintenance of neuronal function in mature flies by controlling the levels of specific mRNAs such as the synaptic regulator Arc1. The polypeptide is Exosome complex component RRP40 (Drosophila melanogaster (Fruit fly)).